A 122-amino-acid chain; its full sequence is Small ribosomal subunit protein uS12 (122 aa).

The segment at 1–24 (MPTINQLIRKKRKSTGKKRTAPAL) is disordered. Basic residues predominate over residues 8–20 (IRKKRKSTGKKRT). Asp89 bears the 3-methylthioaspartic acid mark.

It belongs to the universal ribosomal protein uS12 family. In terms of assembly, part of the 30S ribosomal subunit. Contacts proteins S8 and S17. May interact with IF1 in the 30S initiation complex.

Its function is as follows. With S4 and S5 plays an important role in translational accuracy. Interacts with and stabilizes bases of the 16S rRNA that are involved in tRNA selection in the A site and with the mRNA backbone. Located at the interface of the 30S and 50S subunits, it traverses the body of the 30S subunit contacting proteins on the other side and probably holding the rRNA structure together. The combined cluster of proteins S8, S12 and S17 appears to hold together the shoulder and platform of the 30S subunit. The chain is Small ribosomal subunit protein uS12 from Natranaerobius thermophilus (strain ATCC BAA-1301 / DSM 18059 / JW/NM-WN-LF).